The chain runs to 301 residues: MFELIFLGTSASVPSHDRNHPGLLVQAGGQRILVDCGEGIQRQLLASGAGFRRLDRILLTHGHLDHVLGIPGLFSTLRLRRSADVMSVHGSPGTIDVVIRMLAGLWGDGRAPIPLELVPLTPGQVLDAGAFTINCFAVRHRDTDSFGFEFVSPARRHLLPERLAALAVPDGPIRKTLADGYPVTLDDGRIVTPEDVLGTPGGGKKLVIVGDTETTDGLQAHVRGADLLVIEATFLQRDSATARDYGHLTAAEAAALAASGNVGQLVLNHISGRYPDEEILAEARSIFPATRIASDFDRLTV.

7 residues coordinate Zn(2+): His61, His63, Asp65, His66, His140, Asp211, and His269. Catalysis depends on Asp65, which acts as the Proton acceptor.

It belongs to the RNase Z family. In terms of assembly, homodimer. Zn(2+) is required as a cofactor.

The enzyme catalyses Endonucleolytic cleavage of RNA, removing extra 3' nucleotides from tRNA precursor, generating 3' termini of tRNAs. A 3'-hydroxy group is left at the tRNA terminus and a 5'-phosphoryl group is left at the trailer molecule.. Functionally, zinc phosphodiesterase, which displays some tRNA 3'-processing endonuclease activity. Probably involved in tRNA maturation, by removing a 3'-trailer from precursor tRNA. This chain is Ribonuclease Z, found in Bradyrhizobium sp. (strain ORS 278).